A 274-amino-acid chain; its full sequence is NADPH-dependent 7-cyano-7-deazaguanine reductase (274 aa).

Position 81–83 (81–83 (IES)) interacts with substrate. 83–84 (SK) serves as a coordination point for NADPH. Residue C182 is the Thioimide intermediate of the active site. D189 (proton donor) is an active-site residue. Substrate is bound at residue 221–222 (HE). 250-251 (RG) serves as a coordination point for NADPH.

Belongs to the GTP cyclohydrolase I family. QueF type 2 subfamily. As to quaternary structure, homodimer.

The protein localises to the cytoplasm. It carries out the reaction 7-aminomethyl-7-carbaguanine + 2 NADP(+) = 7-cyano-7-deazaguanine + 2 NADPH + 3 H(+). It participates in tRNA modification; tRNA-queuosine biosynthesis. Functionally, catalyzes the NADPH-dependent reduction of 7-cyano-7-deazaguanine (preQ0) to 7-aminomethyl-7-deazaguanine (preQ1). The polypeptide is NADPH-dependent 7-cyano-7-deazaguanine reductase (Hahella chejuensis (strain KCTC 2396)).